The sequence spans 41 residues: Large ribosomal subunit protein bL36 (41 aa).

It belongs to the bacterial ribosomal protein bL36 family.

The polypeptide is Large ribosomal subunit protein bL36 (Rhodopseudomonas palustris (strain HaA2)).